We begin with the raw amino-acid sequence, 938 residues long: Isoleucine--tRNA ligase (938 aa).

A 'HIGH' region motif is present at residues 58 to 68 (PYANGNIHMGH). Residue E566 participates in L-isoleucyl-5'-AMP binding. The short motif at 607 to 611 (KMSKS) is the 'KMSKS' region element. K610 contributes to the ATP binding site. Zn(2+) is bound by residues C906, C909, C926, and C929.

It belongs to the class-I aminoacyl-tRNA synthetase family. IleS type 1 subfamily. In terms of assembly, monomer. Zn(2+) serves as cofactor.

The protein localises to the cytoplasm. It catalyses the reaction tRNA(Ile) + L-isoleucine + ATP = L-isoleucyl-tRNA(Ile) + AMP + diphosphate. Functionally, catalyzes the attachment of isoleucine to tRNA(Ile). As IleRS can inadvertently accommodate and process structurally similar amino acids such as valine, to avoid such errors it has two additional distinct tRNA(Ile)-dependent editing activities. One activity is designated as 'pretransfer' editing and involves the hydrolysis of activated Val-AMP. The other activity is designated 'posttransfer' editing and involves deacylation of mischarged Val-tRNA(Ile). The polypeptide is Isoleucine--tRNA ligase (Nitratidesulfovibrio vulgaris (strain ATCC 29579 / DSM 644 / CCUG 34227 / NCIMB 8303 / VKM B-1760 / Hildenborough) (Desulfovibrio vulgaris)).